A 2053-amino-acid chain; its full sequence is Nonribosomal peptide synthetase pboA (2053 aa).

Positions 16–402 are adenylation 1; the sequence is ACRDNADRPA…GRRDRVAKVR (387 aa). Positions 503–579 constitute a Carrier 1 domain; the sequence is RSYASVDEVI…HLITVCRERR (77 aa). S540 carries the post-translational modification O-(pantetheine 4'-phosphoryl)serine. The segment at 611-896 is condensation 1; that stretch reads NDPSLYCVKH…LLQSVHRTVQ (286 aa). Residues 1034 to 1418 are adenylation 2; sequence SAAARNPTNI…GRRDRQVKLR (385 aa). Positions 1515–1593 constitute a Carrier 2 domain; that stretch reads VPDTSVKKII…DIVALVEGKI (79 aa). O-(pantetheine 4'-phosphoryl)serine is present on S1553. The segment at 1630–1981 is condensation 2; the sequence is NSQCQSGFNV…LQLRLEYDSD (352 aa).

The protein belongs to the NRP synthetase family. The cofactor is pantetheine 4'-phosphate.

The protein operates within secondary metabolite biosynthesis. Functionally, nonribosomal peptide synthetase; part of the gene cluster that mediates the biosynthesis of protubonine B, a hydroxylated and diacetylated cyclo-L-Trp-L-Leu derivative. The first step of the protubonine B synthesis is performed by the nonribosomal peptide synthetase pboA that catalyzes the formation of cyclo-L-Trp-L-Leu by condensing L-Leu with L-Trp. The flavin-dependent monooxygenase pboD is responsible for hydroxylation at C-3 of the indole ring and subsequent formation of the pyrrolidine ring, leadind to protubonine D. Protubonine D is further diacetylated by two acetyltransferases, pboB and pboC, to form the final product protubonine B via protubonine C. The sequence is that of Nonribosomal peptide synthetase pboA from Aspergillus ustus.